Reading from the N-terminus, the 68-residue chain is DNA gyrase inhibitor YacG (68 aa).

Zn(2+) contacts are provided by Cys14, Cys17, Cys29, and Cys33.

Belongs to the DNA gyrase inhibitor YacG family. In terms of assembly, interacts with GyrB. Zn(2+) serves as cofactor.

Inhibits all the catalytic activities of DNA gyrase by preventing its interaction with DNA. Acts by binding directly to the C-terminal domain of GyrB, which probably disrupts DNA binding by the gyrase. The protein is DNA gyrase inhibitor YacG of Azorhizobium caulinodans (strain ATCC 43989 / DSM 5975 / JCM 20966 / LMG 6465 / NBRC 14845 / NCIMB 13405 / ORS 571).